The primary structure comprises 441 residues: Gamma-glutamyl phosphate reductase (441 aa).

This sequence belongs to the gamma-glutamyl phosphate reductase family.

The protein resides in the cytoplasm. The catalysed reaction is L-glutamate 5-semialdehyde + phosphate + NADP(+) = L-glutamyl 5-phosphate + NADPH + H(+). Its pathway is amino-acid biosynthesis; L-proline biosynthesis; L-glutamate 5-semialdehyde from L-glutamate: step 2/2. Functionally, catalyzes the NADPH-dependent reduction of L-glutamate 5-phosphate into L-glutamate 5-semialdehyde and phosphate. The product spontaneously undergoes cyclization to form 1-pyrroline-5-carboxylate. This is Gamma-glutamyl phosphate reductase from Hydrogenobaculum sp. (strain Y04AAS1).